Reading from the N-terminus, the 301-residue chain is Porphobilinogen deaminase (301 aa).

The residue at position 240 (C240) is an S-(dipyrrolylmethanemethyl)cysteine.

Belongs to the HMBS family. As to quaternary structure, monomer. Requires dipyrromethane as cofactor.

It catalyses the reaction 4 porphobilinogen + H2O = hydroxymethylbilane + 4 NH4(+). The protein operates within porphyrin-containing compound metabolism; protoporphyrin-IX biosynthesis; coproporphyrinogen-III from 5-aminolevulinate: step 2/4. Tetrapolymerization of the monopyrrole PBG into the hydroxymethylbilane pre-uroporphyrinogen in several discrete steps. This is Porphobilinogen deaminase from Clostridioides difficile (strain 630) (Peptoclostridium difficile).